A 226-amino-acid chain; its full sequence is Large ribosomal subunit protein uL1 (226 aa).

This sequence belongs to the universal ribosomal protein uL1 family. Part of the 50S ribosomal subunit.

Its function is as follows. Binds directly to 23S rRNA. The L1 stalk is quite mobile in the ribosome, and is involved in E site tRNA release. In terms of biological role, protein L1 is also a translational repressor protein, it controls the translation of the L11 operon by binding to its mRNA. In Mycoplasma genitalium (strain ATCC 33530 / DSM 19775 / NCTC 10195 / G37) (Mycoplasmoides genitalium), this protein is Large ribosomal subunit protein uL1.